A 324-amino-acid chain; its full sequence is uncharacterized protein (324 aa).

The next 8 membrane-spanning stretches (helical) occupy residues 5 to 24, 39 to 61, 68 to 90, 95 to 117, 130 to 152, 162 to 179, 199 to 218, and 228 to 250; these read VIGI…NRAM, FIFM…PLLL, FYWI…FAAA, WLIA…LFYV, QKIP…LIQL, MLLF…AYPL, LGMT…YGWW, and TVQS…FWAT.

Its subcellular location is the cell membrane. This is an uncharacterized protein from Bacillus subtilis (strain 168).